Consider the following 146-residue polypeptide: uncharacterized protein (146 aa).

Residues 7–146 (LDINYKTDEL…DGHDVLVWTP (140 aa)) form the N-acetyltransferase domain.

This is an uncharacterized protein from Staphylococcus saprophyticus subsp. saprophyticus (strain ATCC 15305 / DSM 20229 / NCIMB 8711 / NCTC 7292 / S-41).